The chain runs to 99 residues: Putative endopeptidase RzpR (99 aa).

This chain is Putative endopeptidase RzpR (rzpR), found in Escherichia coli (strain K12).